Consider the following 326-residue polypeptide: MAMTSAVKDELSRLSVTKTCCRRSEVSSLLRFAGGLHIVAGRVVVEAELDSGSSARRLRKEIHELFGHQSDVHVITSGGLRKGTRYVVRVVKDGEGLARQTGLLDPRGRPVRGLPAHVVSGGACDSESAWRGAFLAHGSLTEPGRSSSLEVTCPGPEAALALVGAARRLGIQAKSREVRGADRVVVRDGDAIGALLTRLGAHSSVLAWEERRMRREVRATANRLANFDDANLRRSARAAVAAAARVERALELLGPTAPDHLLVAGKLRLSHRQASLEELGQLAEPPMTKDAVAGRIRRLLAMADKRARELGLPDTESAVTAEMLEA.

A DNA-binding region (H-T-H motif) is located at residues 275-308; it reads SLEELGQLAEPPMTKDAVAGRIRRLLAMADKRAR.

It belongs to the WhiA family.

In terms of biological role, involved in cell division and chromosome segregation. This Saccharopolyspora erythraea (strain ATCC 11635 / DSM 40517 / JCM 4748 / NBRC 13426 / NCIMB 8594 / NRRL 2338) protein is Probable cell division protein WhiA.